We begin with the raw amino-acid sequence, 220 residues long: Thiamine-phosphate synthase (220 aa).

4-amino-2-methyl-5-(diphosphooxymethyl)pyrimidine is bound by residues 39–43 and Asn-80; that span reads QLRDK. The Mg(2+) site is built by Asp-81 and Asp-100. Residue Ser-119 participates in 4-amino-2-methyl-5-(diphosphooxymethyl)pyrimidine binding. 2-[(2R,5Z)-2-carboxy-4-methylthiazol-5(2H)-ylidene]ethyl phosphate is bound at residue 145 to 147; it reads TPT. Lys-148 contributes to the 4-amino-2-methyl-5-(diphosphooxymethyl)pyrimidine binding site. Gly-176 lines the 2-[(2R,5Z)-2-carboxy-4-methylthiazol-5(2H)-ylidene]ethyl phosphate pocket.

It belongs to the thiamine-phosphate synthase family. The cofactor is Mg(2+).

It catalyses the reaction 2-[(2R,5Z)-2-carboxy-4-methylthiazol-5(2H)-ylidene]ethyl phosphate + 4-amino-2-methyl-5-(diphosphooxymethyl)pyrimidine + 2 H(+) = thiamine phosphate + CO2 + diphosphate. The enzyme catalyses 2-(2-carboxy-4-methylthiazol-5-yl)ethyl phosphate + 4-amino-2-methyl-5-(diphosphooxymethyl)pyrimidine + 2 H(+) = thiamine phosphate + CO2 + diphosphate. The catalysed reaction is 4-methyl-5-(2-phosphooxyethyl)-thiazole + 4-amino-2-methyl-5-(diphosphooxymethyl)pyrimidine + H(+) = thiamine phosphate + diphosphate. It functions in the pathway cofactor biosynthesis; thiamine diphosphate biosynthesis; thiamine phosphate from 4-amino-2-methyl-5-diphosphomethylpyrimidine and 4-methyl-5-(2-phosphoethyl)-thiazole: step 1/1. In terms of biological role, condenses 4-methyl-5-(beta-hydroxyethyl)thiazole monophosphate (THZ-P) and 2-methyl-4-amino-5-hydroxymethyl pyrimidine pyrophosphate (HMP-PP) to form thiamine monophosphate (TMP). The chain is Thiamine-phosphate synthase from Mycobacterium marinum (strain ATCC BAA-535 / M).